The chain runs to 151 residues: MRVRIAVIGKLDGFIKEGIKHYEKFLRRFCKPEVLEIKRVHRGSIEEIVRKETEDLTNRILPGSFVMVMDKRGEEVSSEEFADFLKDLEMKGKDITILIGGPYGLNEEIFAKAHRVFSLSKMTFTHGMTVLIVLEQIFRAFKIIHGENYHY.

Residues glycine 100 and 119-124 (LSKMTF) contribute to the S-adenosyl-L-methionine site.

It belongs to the RNA methyltransferase RlmH family. As to quaternary structure, homodimer.

Its subcellular location is the cytoplasm. It catalyses the reaction pseudouridine(1915) in 23S rRNA + S-adenosyl-L-methionine = N(3)-methylpseudouridine(1915) in 23S rRNA + S-adenosyl-L-homocysteine + H(+). Its function is as follows. Specifically methylates the pseudouridine at position 1915 (m3Psi1915) in 23S rRNA. This chain is Ribosomal RNA large subunit methyltransferase H, found in Thermotoga maritima (strain ATCC 43589 / DSM 3109 / JCM 10099 / NBRC 100826 / MSB8).